Consider the following 281-residue polypeptide: 2-dehydro-3-deoxyphosphooctonate aldolase (281 aa).

It belongs to the KdsA family.

The protein resides in the cytoplasm. It carries out the reaction D-arabinose 5-phosphate + phosphoenolpyruvate + H2O = 3-deoxy-alpha-D-manno-2-octulosonate-8-phosphate + phosphate. Its pathway is carbohydrate biosynthesis; 3-deoxy-D-manno-octulosonate biosynthesis; 3-deoxy-D-manno-octulosonate from D-ribulose 5-phosphate: step 2/3. The protein operates within bacterial outer membrane biogenesis; lipopolysaccharide biosynthesis. In Pseudomonas entomophila (strain L48), this protein is 2-dehydro-3-deoxyphosphooctonate aldolase.